We begin with the raw amino-acid sequence, 139 residues long: D-ribose pyranase (139 aa).

Residue histidine 20 is the Proton donor of the active site. Substrate contacts are provided by residues aspartate 28, histidine 106, and 128 to 130; that span reads FAN.

This sequence belongs to the RbsD / FucU family. RbsD subfamily. Homodecamer.

It localises to the cytoplasm. It carries out the reaction beta-D-ribopyranose = beta-D-ribofuranose. The protein operates within carbohydrate metabolism; D-ribose degradation; D-ribose 5-phosphate from beta-D-ribopyranose: step 1/2. Its function is as follows. Catalyzes the interconversion of beta-pyran and beta-furan forms of D-ribose. This is D-ribose pyranase from Yersinia pseudotuberculosis serotype O:1b (strain IP 31758).